Consider the following 200-residue polypeptide: MEALSGRVGVKCGRWNPTAEQVKVLTELFRAGLRTPSTEQIQRISTHLSAFGKVESKNVFYWFQNHKARERHHHKKRRRGASSPDSGSNDDDGRAAAHEGDADLVLQPPESKREARSYGHHHRLMTCYVRDVVETEAMWERPTREVETLELFPLKSYDLEVDKVRYVRGGGGEQCREISFFDVAAGRDPPLELRLCSFGL.

A DNA-binding region (homeobox; WUS-type) is located at residues 10-74; the sequence is VKCGRWNPTA…NHKARERHHH (65 aa). Basic residues predominate over residues 70-80; that stretch reads ERHHHKKRRRG. A disordered region spans residues 70-118; it reads ERHHHKKRRRGASSPDSGSNDDDGRAAAHEGDADLVLQPPESKREARSY. Residues 91–101 are compositionally biased toward basic and acidic residues; it reads DDGRAAAHEGD.

Belongs to the WUS homeobox family. Specifically expressed in the central cells of the quiescent center (QC) of the root.

Its subcellular location is the nucleus. Transcription factor which may be involved in the specification and maintenance of the stem cells (QC cells) in the root apical meristem (RAM). The sequence is that of WUSCHEL-related homeobox 9 (WOX9) from Oryza sativa subsp. japonica (Rice).